An 89-amino-acid polypeptide reads, in one-letter code: Small ribosomal subunit protein uS15 (89 aa).

It belongs to the universal ribosomal protein uS15 family. In terms of assembly, part of the 30S ribosomal subunit. Forms a bridge to the 50S subunit in the 70S ribosome, contacting the 23S rRNA.

In terms of biological role, one of the primary rRNA binding proteins, it binds directly to 16S rRNA where it helps nucleate assembly of the platform of the 30S subunit by binding and bridging several RNA helices of the 16S rRNA. Its function is as follows. Forms an intersubunit bridge (bridge B4) with the 23S rRNA of the 50S subunit in the ribosome. The sequence is that of Small ribosomal subunit protein uS15 from Anaeromyxobacter sp. (strain Fw109-5).